The following is a 239-amino-acid chain: MTAPLSVFVTGTDTEIGKTFVSAAMLHGFARHGLRAAALKPVAAGAYERDGVWRNEDADQLDAAANVALPPELRTPFLLKAPAAPHIVAAQEGVTLDLDTIVACHREALTRADVVVVEGVGGFRVPLNDTQDTADLAVALGLPVVLVVGVRLGCISHALLTADAIRQRGLTLAGWVANHVDPAMSFADENVATIRDWLAREHRAPLIGRIAHMTPAAPESAAAMLDIAALVESLRTARR.

An ATP-binding site is contributed by 15–20 (EIGKTF). Residue threonine 19 coordinates Mg(2+). The active site involves lysine 40. ATP contacts are provided by residues aspartate 57, 118–121 (EGVG), and 178–179 (NH). Aspartate 57 and glutamate 118 together coordinate Mg(2+).

It belongs to the dethiobiotin synthetase family. In terms of assembly, homodimer. Requires Mg(2+) as cofactor.

The protein resides in the cytoplasm. The catalysed reaction is (7R,8S)-7,8-diammoniononanoate + CO2 + ATP = (4R,5S)-dethiobiotin + ADP + phosphate + 3 H(+). Its pathway is cofactor biosynthesis; biotin biosynthesis; biotin from 7,8-diaminononanoate: step 1/2. Catalyzes a mechanistically unusual reaction, the ATP-dependent insertion of CO2 between the N7 and N8 nitrogen atoms of 7,8-diaminopelargonic acid (DAPA, also called 7,8-diammoniononanoate) to form a ureido ring. This chain is ATP-dependent dethiobiotin synthetase BioD, found in Burkholderia cenocepacia (strain HI2424).